Consider the following 496-residue polypeptide: Ankyrin repeat domain-containing protein 53 (496 aa).

Positions 1-15 (MASAGSTARRAGSGS) are enriched in low complexity. Residues 1 to 66 (MASAGSTARR…RPSEESDQTT (66 aa)) form a disordered region. A compositionally biased stretch (basic and acidic residues) spans 51-60 (AESKQPRPSE). ANK repeat units lie at residues 105–135 (KGFTAIHFAAQRGKLACLQVLVEEYKFPVNL), 139–172 (NSQTPLHLVIHKDNTTVALPCIYYLLEKGAALNA), and 176–205 (NGCTPLHLAVREGLLDCVKVLVQSGANVHA). Residues 292–320 (LVSNTKQARATALSKTPEQRGSQCSSSFH) are disordered.

As to quaternary structure, interacts with PSRC1; recruited by PSRC1 to the spindle during mitosis. Post-translationally, phosphorylated during mitosis.

The protein localises to the cytoplasm. It localises to the cytoskeleton. Its subcellular location is the spindle. It is found in the spindle pole. Functionally, required for normal progression through mitosis. Involved in chromosome alignment and cytokinesis via regulation of microtubules polymerization. The chain is Ankyrin repeat domain-containing protein 53 (ANKRD53) from Macaca fascicularis (Crab-eating macaque).